Here is a 379-residue protein sequence, read N- to C-terminus: Probable pectin lyase B (379 aa).

The N-terminal stretch at methionine 1–alanine 20 is a signal peptide. 2 disulfides stabilise this stretch: cysteine 83-cysteine 102 and cysteine 92-cysteine 226. Residues asparagine 129 and asparagine 252 are each glycosylated (N-linked (GlcNAc...) asparagine). Arginine 256 is an active-site residue. An intrachain disulfide couples cysteine 323 to cysteine 331.

Belongs to the polysaccharide lyase 1 family.

It localises to the secreted. It carries out the reaction Eliminative cleavage of (1-&gt;4)-alpha-D-galacturonan methyl ester to give oligosaccharides with 4-deoxy-6-O-methyl-alpha-D-galact-4-enuronosyl groups at their non-reducing ends.. Pectinolytic enzymes consist of four classes of enzymes: pectin lyase, polygalacturonase, pectin methylesterase and rhamnogalacturonase. Among pectinolytic enzymes, pectin lyase is the most important in depolymerization of pectin, since it cleaves internal glycosidic bonds of highly methylated pectins. This is Probable pectin lyase B (pelB) from Aspergillus niger (strain ATCC MYA-4892 / CBS 513.88 / FGSC A1513).